The primary structure comprises 407 residues: Proteasome-activating nucleotidase (407 aa).

Residues 22–67 (KEKTQIAELESKVLRLELKNKDISRENVQIKKENEILKRELDKLRI) adopt a coiled-coil conformation. Residues 192-197 (GTGKTL) and histidine 331 contribute to the ATP site. Positions 405–407 (MYG) are docks into pockets in the proteasome alpha-ring to cause gate opening.

The protein belongs to the AAA ATPase family. As to quaternary structure, homohexamer. The hexameric complex has a two-ring architecture resembling a top hat that caps the 20S proteasome core at one or both ends. Upon ATP-binding, the C-terminus of PAN interacts with the alpha-rings of the proteasome core by binding to the intersubunit pockets.

The protein localises to the cytoplasm. Functionally, ATPase which is responsible for recognizing, binding, unfolding and translocation of substrate proteins into the archaeal 20S proteasome core particle. Is essential for opening the gate of the 20S proteasome via an interaction with its C-terminus, thereby allowing substrate entry and access to the site of proteolysis. Thus, the C-termini of the proteasomal ATPase function like a 'key in a lock' to induce gate opening and therefore regulate proteolysis. Unfolding activity requires energy from ATP hydrolysis, whereas ATP binding alone promotes ATPase-20S proteasome association which triggers gate opening, and supports translocation of unfolded substrates. The polypeptide is Proteasome-activating nucleotidase (Methanococcus maripaludis (strain C6 / ATCC BAA-1332)).